The chain runs to 119 residues: Basic phospholipase A2 homolog 1 (119 aa).

7 disulfides stabilise this stretch: Cys11–Cys72, Cys27–Cys118, Cys29–Cys45, Cys44–Cys99, Cys51–Cys92, Cys61–Cys85, and Cys79–Cys90. The tract at residues 107-117 is important for membrane-damaging activities in eukaryotes and bacteria; heparin-binding; sequence KENYNIDPKKR.

This sequence belongs to the phospholipase A2 family. Group I subfamily. D49 sub-subfamily. In terms of tissue distribution, expressed by the venom gland.

It localises to the secreted. This is Basic phospholipase A2 homolog 1 from Notechis scutatus scutatus (Mainland tiger snake).